Consider the following 82-residue polypeptide: Delta-ctenitoxin-Pn2c (82 aa).

An N-terminal signal peptide occupies residues 1 to 17 (MKVAILFLSILVLAVAS). The propeptide occupies 18 to 34 (ESIEESRDDFAVEELGR). 5 cysteine pairs are disulfide-bonded: Cys-37–Cys-51, Cys-44–Cys-57, Cys-48–Cys-80, Cys-50–Cys-65, and Cys-59–Cys-63.

Expressed by the venom gland.

The protein resides in the secreted. Functionally, reversible inhibitor of voltage-gated sodium channels (Nav). Delays the fast inactivation kinetics of neuronal-type sodium channels. In vivo, it induces rat penile erection. This effect may be due to the neuronal nitric oxide synthase (NOS1), since one of its selective inhibitor completely abolishes all the toxic effects of the toxin. This toxin also causes scratching, lacrimation, hypersalivation, sweating and agitation followed by spastic paralysis of the anterior and posterior extremities and death at dose levels of 0.24 mg/mouse. It is also insecticidal to the larval and adult forms of the house fly. This is Delta-ctenitoxin-Pn2c from Phoneutria nigriventer (Brazilian armed spider).